The sequence spans 282 residues: Cholesterol 25-hydroxylase-like protein 1, member 1 (282 aa).

N-linked (GlcNAc...) asparagine glycosylation is present at N3. Transmembrane regions (helical) follow at residues 40–60 (FFPV…FAVL), 85–107 (MLRT…VLIT), and 127–147 (FSGG…WHMV). The 133-residue stretch at 133-265 (ALLVFDTQYF…FSHWDKIFGT (133 aa)) folds into the Fatty acid hydroxylase domain. Positions 144–148 (WHMVH) match the Histidine box-1 motif. Positions 159 to 163 (HAIHH) match the Histidine box-2 motif. Positions 240–246 (AHDMHHQ) match the Histidine box-3 motif.

Belongs to the sterol desaturase family. It depends on Fe cation as a cofactor.

It is found in the endoplasmic reticulum membrane. Its function is as follows. May catalyze the formation of 25-hydroxycholesterol from cholesterol. The polypeptide is Cholesterol 25-hydroxylase-like protein 1, member 1 (ch25hl1.1) (Danio rerio (Zebrafish)).